We begin with the raw amino-acid sequence, 222 residues long: Beta-amylase (222 aa).

Thr-36 is a binding site for substrate. Glu-74 (proton acceptor) is an active-site residue. Residues 75–76 (NA) and Arg-114 each bind substrate.

Belongs to the glycosyl hydrolase 14 family.

The enzyme catalyses Hydrolysis of (1-&gt;4)-alpha-D-glucosidic linkages in polysaccharides so as to remove successive maltose units from the non-reducing ends of the chains.. This chain is Beta-amylase (BMY1), found in Secale cereale (Rye).